Here is a 332-residue protein sequence, read N- to C-terminus: MKTLGEFIVEKQHEFSHATGELTALLSAIKLGAKIIHRDINKAGLVDILGASGAENVQGEVQQKLDLFANEKLKAALKARDIVAGIASEEEDEIVVFEGCEHAKYVVLMDPLDGSSNIDVNVSVGTIFSIYRRVTPVGTPVTEEDFLQPGNKQVAAGYVVYGSSTMLVYSTGCGVHAFTYDPSLGVFCLCQERMRFPEKGKTYSINEGNYIKFPNGVKKYIKFCQEEDKSTNRPYTSRYIGSLVADFHRNLLKGGIYLYPSTASHPDGKLRLLYECNPMAFLAEQAGGKASDGKERILDIIPETLHQRRSFFVGNDHMVEDVERFICEFPDA.

Positions 89, 110, 112, and 113 each coordinate Mg(2+). Residues aspartate 113–serine 116, asparagine 206, tyrosine 239, tyrosine 257–tyrosine 259, and lysine 269 contribute to the substrate site. Residue glutamate 275 participates in Mg(2+) binding.

This sequence belongs to the FBPase class 1 family. In terms of assembly, homotetramer. Requires Mg(2+) as cofactor.

It localises to the cytoplasm. It carries out the reaction beta-D-fructose 1,6-bisphosphate + H2O = beta-D-fructose 6-phosphate + phosphate. It functions in the pathway carbohydrate biosynthesis; gluconeogenesis. In Escherichia coli O157:H7, this protein is Fructose-1,6-bisphosphatase class 1.